The sequence spans 154 residues: Aspartate carbamoyltransferase regulatory chain (154 aa).

4 residues coordinate Zn(2+): Cys-109, Cys-114, Cys-138, and Cys-141.

Belongs to the PyrI family. Contains catalytic and regulatory chains. Zn(2+) is required as a cofactor.

In terms of biological role, involved in allosteric regulation of aspartate carbamoyltransferase. The polypeptide is Aspartate carbamoyltransferase regulatory chain (Methanothrix thermoacetophila (strain DSM 6194 / JCM 14653 / NBRC 101360 / PT) (Methanosaeta thermophila)).